Reading from the N-terminus, the 242-residue chain is MAQEIQKENNDHLVQSSDPEHPANLIPDLCRRFYNWGWVTGTGGGTSIRRDNHIFIAPSGVQKEMMKSDNIFVLEFPTPKYPPSDRKYIRKPLDLKPSACTPLFLAAFERGAGCCIHTHSQWAVLVTLLVEREKGPNAYFEISNIEQIKGIPRGKGKGMMGFYDTLRIPIIDNTAFEEDLTGSLEKAMEEYPDTYAVLVRRHGIYVWGDDVVKAKTQCESLDYLFQLAVEMHKLGLPWVKET.

Over residues 1–11 (MAQEIQKENND) the composition is skewed to basic and acidic residues. Residues 1 to 20 (MAQEIQKENNDHLVQSSDPE) are disordered. A substrate-binding site is contributed by Cys100. Zn(2+) is bound by residues His117 and His119. Glu146 serves as the catalytic Proton donor/acceptor. Residue His202 participates in Zn(2+) binding.

This sequence belongs to the aldolase class II family. MtnB subfamily. Requires Zn(2+) as cofactor.

It is found in the cytoplasm. The enzyme catalyses 5-(methylsulfanyl)-D-ribulose 1-phosphate = 5-methylsulfanyl-2,3-dioxopentyl phosphate + H2O. Its pathway is amino-acid biosynthesis; L-methionine biosynthesis via salvage pathway; L-methionine from S-methyl-5-thio-alpha-D-ribose 1-phosphate: step 2/6. Functionally, catalyzes the dehydration of methylthioribulose-1-phosphate (MTRu-1-P) into 2,3-diketo-5-methylthiopentyl-1-phosphate (DK-MTP-1-P). This chain is Methylthioribulose-1-phosphate dehydratase, found in Aspergillus niger (strain ATCC MYA-4892 / CBS 513.88 / FGSC A1513).